The sequence spans 1308 residues: Receptor tyrosine-protein kinase erbB-4 (1308 aa).

The first 25 residues, 1-25 (MKLATGLWVWGSLLMAAGTVQPSAS), serve as a signal peptide directing secretion. At 26-652 (QSVCAGTENK…TLPQHARTPL (627 aa)) the chain is on the extracellular side. Residues cysteine 29 and cysteine 56 are joined by a disulfide bond. N-linked (GlcNAc...) asparagine glycosylation is found at asparagine 138, asparagine 174, and asparagine 181. 12 disulfide bridges follow: cysteine 156–cysteine 186, cysteine 189–cysteine 197, cysteine 193–cysteine 205, cysteine 213–cysteine 221, cysteine 217–cysteine 229, cysteine 230–cysteine 238, cysteine 234–cysteine 246, cysteine 249–cysteine 258, cysteine 262–cysteine 289, cysteine 293–cysteine 304, cysteine 308–cysteine 323, and cysteine 326–cysteine 330. Asparagine 253 carries an N-linked (GlcNAc...) asparagine glycan. N-linked (GlcNAc...) asparagine glycans are attached at residues asparagine 410, asparagine 473, and asparagine 495. 10 disulfide bridges follow: cysteine 503–cysteine 512, cysteine 507–cysteine 520, cysteine 523–cysteine 532, cysteine 536–cysteine 552, cysteine 555–cysteine 569, cysteine 559–cysteine 577, cysteine 580–cysteine 589, cysteine 593–cysteine 614, cysteine 617–cysteine 625, and cysteine 621–cysteine 633. Residue asparagine 548 is glycosylated (N-linked (GlcNAc...) asparagine). N-linked (GlcNAc...) asparagine glycosylation is present at asparagine 576. Asparagine 620 carries an N-linked (GlcNAc...) asparagine glycan. The chain crosses the lipid bilayer at residues 653–673 (IAAGVIGGLFILVIMALTFAV). Residues 674 to 1308 (YVRRKSIKKK…PPYRHRNTVV (635 aa)) lie on the Cytoplasmic side of the membrane. The Nuclear localization signal signature appears at 676 to 684 (RRKSIKKKR). In terms of domain architecture, Protein kinase spans 718 to 985 (LKRVKVLGSG…RMARDPQRYL (268 aa)). ATP contacts are provided by residues 724-732 (LGSGAFGTV), lysine 751, 797-799 (QLM), and 843-848 (DLAARN). The active-site Proton acceptor is aspartate 843. Phosphotyrosine; by autocatalysis occurs at positions 875, 1035, and 1056. The PPxy motif 1 motif lies at 1032 to 1035 (PPIY). Residues 1117-1149 (PHVQEDSSTQRYSADPTVFAPERNPRGELDEEG) form a disordered region. 7 positions are modified to phosphotyrosine; by autocatalysis: tyrosine 1150, tyrosine 1162, tyrosine 1188, tyrosine 1202, tyrosine 1242, tyrosine 1258, and tyrosine 1284. Residues 1282 to 1285 (PEYL) carry the PPxY motif 2 motif. A PDZ-binding motif is present at residues 1290 to 1292 (LKP).

It belongs to the protein kinase superfamily. Tyr protein kinase family. EGF receptor subfamily. As to quaternary structure, monomer in the absence of bound ligand. Homodimer or heterodimer with another ERBB family member upon ligand binding, thus forming heterotetramers. Interacts with EGFR and ERBB2. Interacts with DLG2 (via its PDZ domain), DLG3 (via its PDZ domain), DLG4 (via its PDZ domain) and SNTB2 (via its PDZ domain). Interacts with MUC1. Interacts (via its PPxy motifs) with WWOX. Interacts (via the PPxY motif 3 of isoform JM-A CYT-2) with YAP1 (via the WW domain 1 of isoform 1). Interacts (isoform JM-A CYT-1 and isoform JM-B CYT-1) with WWP1. Interacts (via its intracellular domain) with TRIM28. Interacts (via the intracellular domains of both CYT-1 and CYT-2 isoforms) with KAP1; the interaction does not phosphorylate KAP1 but represses ERBB4-mediated transcriptional activity. Interacts with PRPU, DDX23, MATR3, RBM15, ILF3, KAP1, U5S1, U2SURP, ITCH, HNRNPU, AP2A1, NULC, LEO1, WWP2, IGHG1, HXK1, GRB7 and SRRT. Interacts (phosphorylated isoform JM-A CYT-1 and isoform JM-B CYT-1) with PIK3R1. Interacts with SHC1. Interacts with GRB2. Interacts (soluble intracellular domain) with BCL2. Interacts (phosphorylated) with STAT1. Interacts with CBFA2T3. Interacts (soluble intracellular domain) with STAT5A. Isoform JM-A CYT-1 and isoform JM-A CYT-2 are processed by ADAM17. Proteolytic processing in response to ligand or 12-O-tetradecanoylphorbol-13-acetate stimulation results in the production of 120 kDa soluble receptor forms and intermediate membrane-anchored 80 kDa fragments (m80HER4), which are further processed by a presenilin-dependent gamma-secretase to release a cytoplasmic intracellular domain (E4ICD; E4ICD1/s80Cyt1 or E4ICD2/s80Cyt2, depending on the isoform). Membrane-anchored 80 kDa fragments of the processed isoform JM-A CYT-1 are more readily degraded by the proteasome than fragments of isoform JM-A CYT-2, suggesting a prevalence of E4ICD2 over E4ICD1. Isoform JM-B CYT-1 and isoform JM-B CYT-2 lack the ADAM17 cleavage site and are not processed by ADAM17, precluding further processing by gamma-secretase. Post-translationally, autophosphorylated on tyrosine residues in response to ligand binding. Autophosphorylation occurs in trans, i.e. one subunit of the dimeric receptor phosphorylates tyrosine residues on the other subunit. Ligands trigger phosphorylation at specific tyrosine residues, thereby creating binding sites for scaffold proteins and effectors. Constitutively phosphorylated at a basal level when overexpressed in heterologous systems; ligand binding leads to increased phosphorylation. Phosphorylation at Tyr-1035 is important for interaction with STAT1. Phosphorylation at Tyr-1056 is important for interaction with PIK3R1. Phosphorylation at Tyr-1242 is important for interaction with SHC1. Phosphorylation at Tyr-1188 may also contribute to the interaction with SHC1. Isoform JM-A CYT-2 is constitutively phosphorylated on tyrosine residues in a ligand-independent manner. E4ICD2 but not E4ICD1 is phosphorylated on tyrosine residues. In terms of processing, ubiquitinated. During mitosis, the ERBB4 intracellular domain is ubiquitinated by the APC/C complex and targeted to proteasomal degradation. Isoform JM-A CYT-1 and isoform JM-B CYT-1 are ubiquitinated by WWP1. The ERBB4 intracellular domain (E4ICD1) is ubiquitinated, and this involves NEDD4. Isoform JM-A CYT-2 and isoform JM-B CYT-2 are expressed in cerebellum, cerebral cortex, spinal cord, medulla oblongata and eye, but the kidney expresses solely isoform JM-A CYT-2 and the heart solely isoform JM-B CYT-2.

It is found in the cell membrane. The protein resides in the nucleus. Its subcellular location is the mitochondrion. The enzyme catalyses L-tyrosyl-[protein] + ATP = O-phospho-L-tyrosyl-[protein] + ADP + H(+). Binding of a cognate ligand leads to dimerization and activation by autophosphorylation on tyrosine residues. In vitro kinase activity is increased by Mg(2+). Functionally, tyrosine-protein kinase that plays an essential role as cell surface receptor for neuregulins and EGF family members and regulates development of the heart, the central nervous system and the mammary gland, gene transcription, cell proliferation, differentiation, migration and apoptosis. Required for normal cardiac muscle differentiation during embryonic development, and for postnatal cardiomyocyte proliferation. Required for normal development of the embryonic central nervous system, especially for normal neural crest cell migration and normal axon guidance. Required for mammary gland differentiation, induction of milk proteins and lactation. Acts as cell-surface receptor for the neuregulins NRG1, NRG2, NRG3 and NRG4 and the EGF family members BTC, EREG and HBEGF. Ligand binding triggers receptor dimerization and autophosphorylation at specific tyrosine residues that then serve as binding sites for scaffold proteins and effectors. Ligand specificity and signaling is modulated by alternative splicing, proteolytic processing, and by the formation of heterodimers with other ERBB family members, thereby creating multiple combinations of intracellular phosphotyrosines that trigger ligand- and context-specific cellular responses. Mediates phosphorylation of SHC1 and activation of the MAP kinases MAPK1/ERK2 and MAPK3/ERK1. Isoform JM-A CYT-1 and isoform JM-B CYT-1 phosphorylate PIK3R1, leading to the activation of phosphatidylinositol 3-kinase and AKT1 and protect cells against apoptosis. Isoform JM-A CYT-1 and isoform JM-B CYT-1 mediate reorganization of the actin cytoskeleton and promote cell migration in response to NRG1. Isoform JM-A CYT-2 and isoform JM-B CYT-2 lack the phosphotyrosine that mediates interaction with PIK3R1, and hence do not phosphorylate PIK3R1, do not protect cells against apoptosis, and do not promote reorganization of the actin cytoskeleton and cell migration. Proteolytic processing of isoform JM-A CYT-1 and isoform JM-A CYT-2 gives rise to the corresponding soluble intracellular domains (4ICD) that translocate to the nucleus, promote nuclear import of STAT5A, activation of STAT5A, mammary epithelium differentiation, cell proliferation and activation of gene expression. The ERBB4 soluble intracellular domains (4ICD) colocalize with STAT5A at the CSN2 promoter to regulate transcription of milk proteins during lactation. The ERBB4 soluble intracellular domains can also translocate to mitochondria and promote apoptosis. The polypeptide is Receptor tyrosine-protein kinase erbB-4 (Erbb4) (Mus musculus (Mouse)).